Consider the following 102-residue polypeptide: MLSLVKRSILHSIPITRHILPIQLILVKMNHVQIRNIKLYHFISYGFMLTKLTVFLFNLFFYRLRILCRLTLLILSLPVQIYIKEIQTKMLEKHTASDTSCI.

This is an uncharacterized protein from Saccharomyces cerevisiae (strain ATCC 204508 / S288c) (Baker's yeast).